Consider the following 578-residue polypeptide: Acyl-coenzyme A synthetase ACSM5, mitochondrial (578 aa).

Residues 1 to 22 (MRLWLRGLVYQARRSSWGVFRI) constitute a mitochondrion transit peptide. Lysine 96 carries the N6-acetyllysine; alternate modification. Lysine 96 carries the N6-succinyllysine; alternate modification. Lysine 151 carries the post-translational modification N6-acetyllysine. 229 to 237 (TSGTTGTPK) contributes to the ATP binding site. Lysine 335 carries the post-translational modification N6-acetyllysine. ATP is bound by residues 367 to 372 (EGYGQS), aspartate 454, arginine 469, and lysine 565.

It belongs to the ATP-dependent AMP-binding enzyme family. Mg(2+) is required as a cofactor. Mn(2+) serves as cofactor.

It localises to the mitochondrion matrix. The enzyme catalyses a medium-chain fatty acid + ATP + CoA = a medium-chain fatty acyl-CoA + AMP + diphosphate. Its function is as follows. Catalyzes the activation of fatty acids by CoA to produce an acyl-CoA, the first step in fatty acid metabolism. This chain is Acyl-coenzyme A synthetase ACSM5, mitochondrial (Acsm5), found in Rattus norvegicus (Rat).